The primary structure comprises 245 residues: MSQPKALLRRDGFTFKQFFVAHDRCAMKVGTDGILLGAWAPVAGVKRILDIGSGSGLLALMLAQRTEQHVTIDSVELDAQAANQASENAAESPWAERVQVQCADILAWAPEQTARYDLIVSNPPYYEPGVDCGTPEREQARYTGSLGHPALLAAAANLISEEGFFCVVLPENTGNTFIKTALDIGWFLRLRTDIADTDGKLPHRVLLALSPKEGECFSDRMVIRGPDQRYSEDYTALTQAFYLFM.

It belongs to the methyltransferase superfamily. tRNA (adenine-N(6)-)-methyltransferase family.

The protein localises to the cytoplasm. It catalyses the reaction adenosine(37) in tRNA1(Val) + S-adenosyl-L-methionine = N(6)-methyladenosine(37) in tRNA1(Val) + S-adenosyl-L-homocysteine + H(+). In terms of biological role, specifically methylates the adenine in position 37 of tRNA(1)(Val) (anticodon cmo5UAC). This chain is tRNA1(Val) (adenine(37)-N6)-methyltransferase, found in Enterobacter sp. (strain 638).